The following is a 336-amino-acid chain: Fructose-1,6-bisphosphatase class 1 (336 aa).

Residues Glu90, Asp112, Leu114, and Asp115 each contribute to the Mg(2+) site. Substrate-binding positions include 115 to 118 (DGSS), Asn207, and Lys273. Glu279 contributes to the Mg(2+) binding site.

It belongs to the FBPase class 1 family. As to quaternary structure, homotetramer. Mg(2+) is required as a cofactor.

The protein localises to the cytoplasm. The catalysed reaction is beta-D-fructose 1,6-bisphosphate + H2O = beta-D-fructose 6-phosphate + phosphate. The protein operates within carbohydrate biosynthesis; gluconeogenesis. The polypeptide is Fructose-1,6-bisphosphatase class 1 (Xanthomonas euvesicatoria pv. vesicatoria (strain 85-10) (Xanthomonas campestris pv. vesicatoria)).